The chain runs to 177 residues: ADP-ribose 1''-phosphate phosphatase (177 aa).

Residues 1–177 (MSNITYVKGN…GDMSFTVYQL (177 aa)) enclose the Macro domain. Residues 9 to 11 (GNI), 24 to 26 (SCN), 31 to 36 (WGGGIA), and 147 to 153 (INSGIFG) each bind substrate.

The protein belongs to the POA1 family.

It carries out the reaction ADP-alpha-D-ribose 1''-phosphate + H2O = ADP-D-ribose + phosphate. Functionally, highly specific phosphatase involved in the metabolism of ADP-ribose 1''-phosphate (Appr1p) which is produced as a consequence of tRNA splicing. Removes ADP-ribose from glutamate residues in proteins bearing a single ADP-ribose moiety. Inactive towards proteins bearing poly-ADP-ribose. This is ADP-ribose 1''-phosphate phosphatase (POA1) from Saccharomyces cerevisiae (strain YJM789) (Baker's yeast).